Consider the following 160-residue polypeptide: MDKLKKVLSGQDTEDRSGLSEVVEASSLSWSTRIKGFIACFAIGILCSLLGTVLLWVPRKGLHLFAVFYTFGNIASIGSTIFLMGPVKQLKRMFEPTRLIATIMVLLCFALTLCSAFWWHNKGLALIFCILQSLALTWYSLSFIPFARDAVKKCFAVCLA.

M1 carries the post-translational modification N-acetylmethionine. Topologically, residues 1-36 (MDKLKKVLSGQDTEDRSGLSEVVEASSLSWSTRIKG) are cytoplasmic. S9 is subject to Phosphoserine. A helical transmembrane segment spans residues 37 to 57 (FIACFAIGILCSLLGTVLLWV). Topologically, residues 58–63 (PRKGLH) are lumenal. The chain crosses the membrane as a helical span at residues 64 to 84 (LFAVFYTFGNIASIGSTIFLM). Residues 85-98 (GPVKQLKRMFEPTR) are Cytoplasmic-facing. A helical transmembrane segment spans residues 99-119 (LIATIMVLLCFALTLCSAFWW). Over 120-123 (HNKG) the chain is Lumenal. The helical transmembrane segment at 124–144 (LALIFCILQSLALTWYSLSFI) threads the bilayer. Residues 145–160 (PFARDAVKKCFAVCLA) lie on the Cytoplasmic side of the membrane.

This sequence belongs to the SFT2 family.

Its subcellular location is the membrane. In terms of biological role, may be involved in fusion of retrograde transport vesicles derived from an endocytic compartment with the Golgi complex. In Homo sapiens (Human), this protein is Vesicle transport protein SFT2B.